Here is a 669-residue protein sequence, read N- to C-terminus: Probable potassium transport system protein Kup (669 aa).

12 consecutive transmembrane segments (helical) span residues 47–67 (VLML…TSPL), 86–106 (VIGI…IKYM), 144–164 (TIIG…TPAI), 172–192 (GLTL…IFVM), 206–226 (IGVI…LLGI), 252–272 (GMAG…GEAL), 288–308 (WFFV…ALLL), 326–346 (ALLP…QALI), 378–398 (IYIP…VLTF), 404–424 (LAAA…ILAF), 435–455 (LLKS…FFGA), and 460–480 (IPHG…LMTT).

This sequence belongs to the HAK/KUP transporter (TC 2.A.72) family.

It localises to the cell inner membrane. It catalyses the reaction K(+)(in) + H(+)(in) = K(+)(out) + H(+)(out). Its function is as follows. Transport of potassium into the cell. Likely operates as a K(+):H(+) symporter. The protein is Probable potassium transport system protein Kup of Bdellovibrio bacteriovorus (strain ATCC 15356 / DSM 50701 / NCIMB 9529 / HD100).